The sequence spans 165 residues: MNKTEFYADLNRDFNALMAGETSFLATLANTSALLYERLTDINWAGFYLLEDDTLVLGPFQGKIACVRIPVGRGVCGTAVARNQVQRIEDVHVFDGHIACDAASNSEIVLPLVVKNQIIGVLDIDSTVFGRFTDEDEQGLRQLVAQLEKVLATTDYKKFFASVAG.

Residues 49 to 149 (LLEDDTLVLG…LRQLVAQLEK (101 aa)) form the GAF domain.

It belongs to the free Met sulfoxide reductase family.

It catalyses the reaction [thioredoxin]-disulfide + L-methionine + H2O = L-methionine (R)-S-oxide + [thioredoxin]-dithiol. Its function is as follows. Catalyzes the reversible oxidation-reduction of the R-enantiomer of free methionine sulfoxide to methionine. Specific for free L-methionine-(R)-S-oxide. The sequence is that of Free methionine-R-sulfoxide reductase (msrC) from Escherichia coli (strain K12).